A 428-amino-acid polypeptide reads, in one-letter code: GTPase Obg (428 aa).

One can recognise an Obg domain in the interval 1 to 158 (MFVDQVKIYV…RDVILELKVL (158 aa)). Residues 159–329 (ADVGLVGFPS…LLFEVANLLE (171 aa)) form the OBG-type G domain. Residues 165–172 (GFPSVGKS), 190–194 (FTTIV), 212–215 (DLPG), 282–285 (NKMD), and 310–312 (SAV) contribute to the GTP site. Residues Ser172 and Thr192 each coordinate Mg(2+). One can recognise an OCT domain in the interval 350-428 (KLETEGVKFD…ILEYEFEFID (79 aa)).

Belongs to the TRAFAC class OBG-HflX-like GTPase superfamily. OBG GTPase family. Monomer. Mg(2+) is required as a cofactor.

It is found in the cytoplasm. An essential GTPase which binds GTP, GDP and possibly (p)ppGpp with moderate affinity, with high nucleotide exchange rates and a fairly low GTP hydrolysis rate. Plays a role in control of the cell cycle, stress response, ribosome biogenesis and in those bacteria that undergo differentiation, in morphogenesis control. In Bacillus cereus (strain Q1), this protein is GTPase Obg.